The primary structure comprises 489 residues: CDK5RAP3 protein homolog (489 aa).

The protein belongs to the CDK5RAP3 family.

In terms of biological role, substrate adapter of E3 ligase complexes mediating ufmylation, the covalent attachment of the ubiquitin-like modifier UFM1 to substrate proteins, and which is involved in various processes, such as ribosome recycling and reticulophagy (also called ER-phagy). This Caenorhabditis elegans protein is CDK5RAP3 protein homolog.